A 444-amino-acid chain; its full sequence is Elongation factor 1-alpha (444 aa).

One can recognise a tr-type G domain in the interval 15 to 236 (KPHINLAVVG…VLDTFQPPPR (222 aa)). The G1 stretch occupies residues 24-31 (GHVDNGKS). Position 24–31 (24–31 (GHVDNGKS)) interacts with GTP. Ser-31 provides a ligand contact to Mg(2+). The tract at residues 80–84 (GVTIE) is G2. Residues 101–104 (DLPG) are G3. GTP contacts are provided by residues 101–105 (DLPGH) and 163–166 (NKMD). Residues 163-166 (NKMD) are G4. Residues 202-204 (SAV) are G5.

The protein belongs to the TRAFAC class translation factor GTPase superfamily. Classic translation factor GTPase family. EF-Tu/EF-1A subfamily.

The protein localises to the cytoplasm. The catalysed reaction is GTP + H2O = GDP + phosphate + H(+). Functionally, GTP hydrolase that promotes the GTP-dependent binding of aminoacyl-tRNA to the A-site of ribosomes during protein biosynthesis. This chain is Elongation factor 1-alpha, found in Pyrobaculum arsenaticum (strain DSM 13514 / JCM 11321 / PZ6).